A 344-amino-acid polypeptide reads, in one-letter code: DNA-directed RNA polymerase subunit alpha (344 aa).

Residues 1–246 (MLVEKFLKDF…EFLFPLVDFE (246 aa)) form an alpha N-terminal domain (alpha-NTD) region. The segment at 259–344 (ESSNLLDMSI…VLSKNVKISE (86 aa)) is alpha C-terminal domain (alpha-CTD).

The protein belongs to the RNA polymerase alpha chain family. As to quaternary structure, homodimer. The RNAP catalytic core consists of 2 alpha, 1 beta, 1 beta' and 1 omega subunit. When a sigma factor is associated with the core the holoenzyme is formed, which can initiate transcription.

The enzyme catalyses RNA(n) + a ribonucleoside 5'-triphosphate = RNA(n+1) + diphosphate. Its function is as follows. DNA-dependent RNA polymerase catalyzes the transcription of DNA into RNA using the four ribonucleoside triphosphates as substrates. The sequence is that of DNA-directed RNA polymerase subunit alpha from Borreliella burgdorferi (strain ATCC 35210 / DSM 4680 / CIP 102532 / B31) (Borrelia burgdorferi).